The following is a 469-amino-acid chain: Receptor-type adenylate cyclase (469 aa).

The Extracellular portion of the chain corresponds to 1 to 59; it reads VDTAEKLSKNGCASNYGATQISVWSMARALNASIPPLTNPMTPSMTFRNSNAGRISGVA. Residue Asn-31 is glycosylated (N-linked (GlcNAc...) asparagine). A helical membrane pass occupies residues 60 to 80; it reads LVGVIIGGALALFLVVALGVV. Topologically, residues 81 to 469 are cytoplasmic; the sequence is PYFFLHNTRD…IDLENDSTTS (389 aa). In terms of domain architecture, Guanylate cyclase spans 103 to 257; the sequence is TLIFTDIESS…RTSNMAARTE (155 aa). Asp-108 and Asp-151 together coordinate Mg(2+).

The protein belongs to the adenylyl cyclase class-3 family. The cofactor is Mg(2+).

It is found in the cell membrane. It carries out the reaction ATP = 3',5'-cyclic AMP + diphosphate. Functionally, could act as a receptor for an unknown ligand. The chain is Receptor-type adenylate cyclase (ESAG4C) from Trypanosoma equiperdum.